We begin with the raw amino-acid sequence, 169 residues long: Transcription antitermination protein NusB (169 aa).

It belongs to the NusB family.

Its function is as follows. Involved in transcription antitermination. Required for transcription of ribosomal RNA (rRNA) genes. Binds specifically to the boxA antiterminator sequence of the ribosomal RNA (rrn) operons. The protein is Transcription antitermination protein NusB of Deinococcus geothermalis (strain DSM 11300 / CIP 105573 / AG-3a).